The chain runs to 484 residues: Cysteine--tRNA ligase (484 aa).

A Zn(2+)-binding site is contributed by Cys-29. Positions 31–41 (PTVQSAPHIGH) match the 'HIGH' region motif. Cys-219, His-244, and Glu-248 together coordinate Zn(2+). The short motif at 275–279 (KMSKS) is the 'KMSKS' region element. Lys-278 is a binding site for ATP.

It belongs to the class-I aminoacyl-tRNA synthetase family. Monomer. Requires Zn(2+) as cofactor.

It localises to the cytoplasm. It carries out the reaction tRNA(Cys) + L-cysteine + ATP = L-cysteinyl-tRNA(Cys) + AMP + diphosphate. In Clavibacter sepedonicus (Clavibacter michiganensis subsp. sepedonicus), this protein is Cysteine--tRNA ligase.